Here is a 128-residue protein sequence, read N- to C-terminus: Keratin-associated protein 2-3 (128 aa).

The tract at residues 5 to 112 (CCGSTLSSLS…SVQSPCCRPP (108 aa)) is 10 X 5 AA repeats of C-C-[CDPQRWG]-[APRS]-[CIPSTVD].

This sequence belongs to the KRTAP type 2 family. Interacts with hair keratins.

Functionally, in the hair cortex, hair keratin intermediate filaments are embedded in an interfilamentous matrix, consisting of hair keratin-associated proteins (KRTAP), which are essential for the formation of a rigid and resistant hair shaft through their extensive disulfide bond cross-linking with abundant cysteine residues of hair keratins. The matrix proteins include the high-sulfur and high-glycine-tyrosine keratins. This is Keratin-associated protein 2-3 (KRTAP2-3) from Homo sapiens (Human).